We begin with the raw amino-acid sequence, 277 residues long: Endochitinase CHI (277 aa).

The N-terminal stretch at 1-31 (MAKPTSRNDRFALFFITLIFLILTVSKPVAS) is a signal peptide. Residues 32-66 (QNCGCASDFCCSKYGYCGTTDEFCGEGCQAGPCRS) enclose the Chitin-binding type-1 domain. Disulfide bonds link Cys-34/Cys-42, Cys-36/Cys-48, Cys-41/Cys-55, and Cys-59/Cys-64. The catalytic stretch occupies residues 75–277 (VSLEGTVTPD…GVAPGDNLTC (203 aa)). Catalysis depends on Glu-136, which acts as the Proton donor. Asn-274 carries an N-linked (GlcNAc...) asparagine glycan.

Belongs to the glycosyl hydrolase 19 family. Chitinase class I subfamily.

The catalysed reaction is Random endo-hydrolysis of N-acetyl-beta-D-glucosaminide (1-&gt;4)-beta-linkages in chitin and chitodextrins.. The sequence is that of Endochitinase CHI from Arabidopsis thaliana (Mouse-ear cress).